Consider the following 214-residue polypeptide: uncharacterized protein (214 aa).

The active-site Proton acceptor is the Y129.

It belongs to the NAD(P)-dependent epimerase/dehydratase family.

This is an uncharacterized protein from Bacillus subtilis (strain 168).